Consider the following 32-residue polypeptide: YGNFPTCSETGEDCSAMHCCRSMTCRNNICAD.

Pro-5 bears the 4-hydroxyproline mark. 3 cysteine pairs are disulfide-bonded: Cys-7–Cys-20, Cys-14–Cys-25, and Cys-19–Cys-30.

Expressed by the venom duct.

It is found in the secreted. The protein is Conotoxin pr6d of Conus parius (Cone snail).